The primary structure comprises 775 residues: Polyribonucleotide nucleotidyltransferase (775 aa).

Asp-487 and Asp-493 together coordinate Mg(2+). The KH domain maps to 554 to 613 (PKVEVVDVPEEKAPLIIGPGGSTVKKIYDETGVKVWVGEQGKVYLFVFPGGDVEKAKQMI). 2 consecutive S1 motif domains span residues 623 to 693 (GAVY…IGIE) and 707 to 775 (GDVY…TDDV).

It belongs to the polyribonucleotide nucleotidyltransferase family. Mg(2+) serves as cofactor.

It is found in the cytoplasm. It carries out the reaction RNA(n+1) + phosphate = RNA(n) + a ribonucleoside 5'-diphosphate. Involved in mRNA degradation. Catalyzes the phosphorolysis of single-stranded polyribonucleotides processively in the 3'- to 5'-direction. This Aquifex aeolicus (strain VF5) protein is Polyribonucleotide nucleotidyltransferase.